The sequence spans 94 residues: Large ribosomal subunit protein uL23 (94 aa).

Belongs to the universal ribosomal protein uL23 family. Part of the 50S ribosomal subunit. Contacts protein L29, and trigger factor when it is bound to the ribosome.

In terms of biological role, one of the early assembly proteins it binds 23S rRNA. One of the proteins that surrounds the polypeptide exit tunnel on the outside of the ribosome. Forms the main docking site for trigger factor binding to the ribosome. In Treponema pallidum (strain Nichols), this protein is Large ribosomal subunit protein uL23.